Here is a 421-residue protein sequence, read N- to C-terminus: Histidine--tRNA ligase (421 aa).

The protein belongs to the class-II aminoacyl-tRNA synthetase family. Homodimer.

Its subcellular location is the cytoplasm. It catalyses the reaction tRNA(His) + L-histidine + ATP = L-histidyl-tRNA(His) + AMP + diphosphate + H(+). The sequence is that of Histidine--tRNA ligase from Francisella tularensis subsp. tularensis (strain SCHU S4 / Schu 4).